Here is a 777-residue protein sequence, read N- to C-terminus: DNA repair helicase/translocase XPB-R (777 aa).

Positions 212 to 416 (AASDGALRSG…DLFHLVGPKL (205 aa)) constitute a Helicase ATP-binding domain. Residue 225-232 (LPCGSGKT) coordinates ATP. The short motif at 369–372 (DEVH) is the DEVH box element. The Helicase C-terminal domain maps to 484–631 (IVKRHVAESS…GYTCSVTEFN (148 aa)).

It belongs to the helicase family. RAD25/XPB subfamily.

It carries out the reaction Couples ATP hydrolysis with the unwinding of duplex DNA by translocating in the 3'-5' direction.. It catalyses the reaction ATP + H2O = ADP + phosphate + H(+). Functionally, ATP-dependent 3'-5' DNA helicase/translocase; binds dsDNA rather than ssDNA, unzipping it in a translocase rather than classical helicase activity. Involved in nucleotide excision repair (NER) of damaged DNA. XPB-R is a paralog of XBP, but is not a component of the TFIIH basal transcription factor and is dispensable for RNA polymerase II transcription. This Trypanosoma brucei brucei (strain 927/4 GUTat10.1) protein is DNA repair helicase/translocase XPB-R.